The following is a 275-amino-acid chain: Glutamate racemase (275 aa).

Residues 22 to 23 (DS) and 54 to 55 (YG) contribute to the substrate site. Catalysis depends on Cys85, which acts as the Proton donor/acceptor. Residue 86-87 (NT) participates in substrate binding. The active-site Proton donor/acceptor is Cys196. Residue 197 to 198 (TH) coordinates substrate.

The protein belongs to the aspartate/glutamate racemases family.

The enzyme catalyses L-glutamate = D-glutamate. The protein operates within cell wall biogenesis; peptidoglycan biosynthesis. In terms of biological role, provides the (R)-glutamate required for cell wall biosynthesis. The polypeptide is Glutamate racemase (Pseudomonas syringae pv. tomato (strain ATCC BAA-871 / DC3000)).